The primary structure comprises 336 residues: Atypical chemokine receptor 1 (336 aa).

The Extracellular portion of the chain corresponds to methionine 1–proline 63. 3 N-linked (GlcNAc...) asparagine glycosylation sites follow: asparagine 16, asparagine 27, and asparagine 33. Cystine bridges form between cysteine 51–cysteine 276 and cysteine 129–cysteine 195. A helical transmembrane segment spans residues phenylalanine 64–phenylalanine 84. Topologically, residues arginine 85 to glycine 95 are cytoplasmic. The helical transmembrane segment at tryptophan 96–leucine 116 threads the bilayer. Topologically, residues alanine 117 to cysteine 129 are extracellular. The helical transmembrane segment at serine 130 to leucine 153 threads the bilayer. The Cytoplasmic portion of the chain corresponds to glycine 154 to threonine 166. Residues leucine 167–alanine 187 traverse the membrane as a helical segment. The Extracellular segment spans residues serine 188–glutamine 207. A helical membrane pass occupies residues alanine 208–alanine 228. Topologically, residues lysine 229 to asparagine 244 are cytoplasmic. Residues isoleucine 245–leucine 265 traverse the membrane as a helical segment. At valine 266–asparagine 287 the chain is on the extracellular side. A helical membrane pass occupies residues leucine 288–cysteine 308. Over histidine 309–serine 336 the chain is Cytoplasmic.

Belongs to the G-protein coupled receptor 1 family. Atypical chemokine receptor subfamily.

The protein localises to the early endosome. It is found in the recycling endosome. Its subcellular location is the membrane. Its function is as follows. Atypical chemokine receptor that controls chemokine levels and localization via high-affinity chemokine binding that is uncoupled from classic ligand-driven signal transduction cascades, resulting instead in chemokine sequestration, degradation, or transcytosis. Also known as interceptor (internalizing receptor) or chemokine-scavenging receptor or chemokine decoy receptor. Has a promiscuous chemokine-binding profile, interacting with inflammatory chemokines of both the CXC and the CC subfamilies but not with homeostatic chemokines. Acts as a receptor for chemokines including CCL2, CCL5, CCL7, CCL11, CCL13, CCL14, CCL17, CXCL5, CXCL6, IL8/CXCL8, CXCL11, GRO, RANTES, MCP-1 and TARC. May regulate chemokine bioavailability and, consequently, leukocyte recruitment through two distinct mechanisms: when expressed in endothelial cells, it sustains the abluminal to luminal transcytosis of tissue-derived chemokines and their subsequent presentation to circulating leukocytes; when expressed in erythrocytes, serves as blood reservoir of cognate chemokines but also as a chemokine sink, buffering potential surges in plasma chemokine levels. The chain is Atypical chemokine receptor 1 (ACKR1) from Saguinus imperator (Emperor tamarin).